The chain runs to 183 residues: Hypoxanthine/guanine phosphoribosyltransferase (183 aa).

Belongs to the purine/pyrimidine phosphoribosyltransferase family. Archaeal HPRT subfamily. Homodimer.

The protein localises to the cytoplasm. The enzyme catalyses IMP + diphosphate = hypoxanthine + 5-phospho-alpha-D-ribose 1-diphosphate. It carries out the reaction GMP + diphosphate = guanine + 5-phospho-alpha-D-ribose 1-diphosphate. The protein operates within purine metabolism; IMP biosynthesis via salvage pathway; IMP from hypoxanthine: step 1/1. Functionally, catalyzes a salvage reaction resulting in the formation of IMP that is energically less costly than de novo synthesis. This is Hypoxanthine/guanine phosphoribosyltransferase from Methanocaldococcus infernus (strain DSM 11812 / JCM 15783 / ME).